Here is a 200-residue protein sequence, read N- to C-terminus: Protein GrpE (200 aa).

This sequence belongs to the GrpE family. As to quaternary structure, homodimer.

It localises to the cytoplasm. Its function is as follows. Participates actively in the response to hyperosmotic and heat shock by preventing the aggregation of stress-denatured proteins, in association with DnaK and GrpE. It is the nucleotide exchange factor for DnaK and may function as a thermosensor. Unfolded proteins bind initially to DnaJ; upon interaction with the DnaJ-bound protein, DnaK hydrolyzes its bound ATP, resulting in the formation of a stable complex. GrpE releases ADP from DnaK; ATP binding to DnaK triggers the release of the substrate protein, thus completing the reaction cycle. Several rounds of ATP-dependent interactions between DnaJ, DnaK and GrpE are required for fully efficient folding. The protein is Protein GrpE of Mycoplasma mycoides subsp. mycoides SC (strain CCUG 32753 / NCTC 10114 / PG1).